Reading from the N-terminus, the 411-residue chain is Glucose-1-phosphate adenylyltransferase (411 aa).

Alpha-D-glucose 1-phosphate is bound by residues Gly-161, 176-177, and Ser-195; that span reads EK.

Belongs to the bacterial/plant glucose-1-phosphate adenylyltransferase family. In terms of assembly, homotetramer.

The enzyme catalyses alpha-D-glucose 1-phosphate + ATP + H(+) = ADP-alpha-D-glucose + diphosphate. It functions in the pathway glycan biosynthesis; glycogen biosynthesis. Its function is as follows. Involved in the biosynthesis of ADP-glucose, a building block required for the elongation reactions to produce glycogen. Catalyzes the reaction between ATP and alpha-D-glucose 1-phosphate (G1P) to produce pyrophosphate and ADP-Glc. The protein is Glucose-1-phosphate adenylyltransferase of Anaeromyxobacter sp. (strain Fw109-5).